A 341-amino-acid polypeptide reads, in one-letter code: Phosphate acyltransferase (341 aa).

The protein belongs to the PlsX family. As to quaternary structure, homodimer. Probably interacts with PlsY.

The protein resides in the cytoplasm. The enzyme catalyses a fatty acyl-[ACP] + phosphate = an acyl phosphate + holo-[ACP]. Its pathway is lipid metabolism; phospholipid metabolism. Catalyzes the reversible formation of acyl-phosphate (acyl-PO(4)) from acyl-[acyl-carrier-protein] (acyl-ACP). This enzyme utilizes acyl-ACP as fatty acyl donor, but not acyl-CoA. The chain is Phosphate acyltransferase from Ehrlichia ruminantium (strain Gardel).